We begin with the raw amino-acid sequence, 328 residues long: Stress response kinase A (328 aa).

The Proton acceptor role is filled by D201. The Mg(2+) site is built by N206 and D217. Residue D217 is part of the active site.

This sequence belongs to the SrkA/RdoA protein kinase family. As to quaternary structure, monomer. Mg(2+) is required as a cofactor.

Its subcellular location is the cytoplasm. The catalysed reaction is L-seryl-[protein] + ATP = O-phospho-L-seryl-[protein] + ADP + H(+). It catalyses the reaction L-threonyl-[protein] + ATP = O-phospho-L-threonyl-[protein] + ADP + H(+). A protein kinase that phosphorylates Ser and Thr residues. Probably acts to suppress the effects of stress linked to accumulation of reactive oxygen species. Probably involved in the extracytoplasmic stress response. Also has a role in LPS synthesis, through regulation of the galETK expression. In terms of biological role, a protein kinase that phosphorylates Ser and Thr residues. Probably acts to suppress the effects of stress linked to accumulation of reactive oxygen species. Probably involved in the extracytoplasmic stress response. The chain is Stress response kinase A from Shigella flexneri.